A 195-amino-acid polypeptide reads, in one-letter code: Glutamyl-tRNA(Gln) amidotransferase subunit C, mitochondrial (195 aa).

The N-terminal 18 residues, 1–18 (MNLSTIGFQVIFKQRLRC), are a transit peptide targeting the mitochondrion.

It belongs to the GatC family. Subunit of the heterotrimeric GatCAB amidotransferase (AdT) complex, composed of A, B and C subunits.

The protein localises to the mitochondrion. It carries out the reaction L-glutamyl-tRNA(Gln) + L-glutamine + ATP + H2O = L-glutaminyl-tRNA(Gln) + L-glutamate + ADP + phosphate + H(+). Functionally, allows the formation of correctly charged Gln-tRNA(Gln) through the transamidation of misacylated Glu-tRNA(Gln) in the mitochondria. The reaction takes place in the presence of glutamine and ATP through an activated gamma-phospho-Glu-tRNA(Gln). The polypeptide is Glutamyl-tRNA(Gln) amidotransferase subunit C, mitochondrial (Brugia malayi (Filarial nematode worm)).